We begin with the raw amino-acid sequence, 201 residues long: Large ribosomal subunit protein uL4 (201 aa).

A disordered region spans residues 39–70 (GRQGTKAQKTRSEVSGGGKKPWRQKGTGRARA).

It belongs to the universal ribosomal protein uL4 family. In terms of assembly, part of the 50S ribosomal subunit.

Its function is as follows. One of the primary rRNA binding proteins, this protein initially binds near the 5'-end of the 23S rRNA. It is important during the early stages of 50S assembly. It makes multiple contacts with different domains of the 23S rRNA in the assembled 50S subunit and ribosome. Functionally, forms part of the polypeptide exit tunnel. The sequence is that of Large ribosomal subunit protein uL4 from Marinobacter nauticus (strain ATCC 700491 / DSM 11845 / VT8) (Marinobacter aquaeolei).